The chain runs to 456 residues: uncharacterized protein (456 aa).

11 helical membrane passes run 12 to 32, 63 to 83, 86 to 106, 143 to 163, 179 to 199, 208 to 228, 237 to 257, 305 to 325, 348 to 368, 390 to 410, and 414 to 434; these read SFIW…YLTL, FAAL…VGVA, VQAG…LGMA, WLAK…IGTF, IPVL…ILGG, SVIV…IILL, ILLI…AVGL, FLDT…TGAW, IGAT…ILGW, LAYI…IWII, and VNGL…KVII.

Belongs to the alanine or glycine:cation symporter (AGCS) (TC 2.A.25) family.

Its subcellular location is the cell inner membrane. This is an uncharacterized protein from Haemophilus influenzae (strain ATCC 51907 / DSM 11121 / KW20 / Rd).